We begin with the raw amino-acid sequence, 1036 residues long: Phytosulfokine receptor 2 (1036 aa).

The first 16 residues, 1-16, serve as a signal peptide directing secretion; the sequence is MVIILLLVFFVGSSVS. 2 N-linked (GlcNAc...) asparagine glycosylation sites follow: Asn36 and Asn45. LRR repeat units lie at residues 89 to 111, 113 to 136, 137 to 159, 160 to 182, 185 to 207, 209 to 231, 233 to 256, 257 to 279, 281 to 303, 305 to 326, 329 to 351, 353 to 375, 377 to 398, 403 to 423, 427 to 450, 451 to 473, and 475 to 498; these read ELRV…ISKL, QLQV…SGLK, LIQS…GVFP, GLVM…LCSS, GIQV…YNCS, SIQQ…LYSI, ELEQ…SNLS, GLKS…FGNL, QLEH…LSQC, KLRV…NFTG, DLCV…LGHC, KMKI…FKNL, SLLF…MNVL, NLST…NNVT, NLAI…LNCK, KLEV…IGKM, and SLFY…TELK. N-linked (GlcNAc...) asparagine glycosylation is found at Asn142, Asn165, and Asn205. N-linked (GlcNAc...) asparagine glycosylation is found at Asn251, Asn254, and Asn278. N-linked (GlcNAc...) asparagine glycosylation is found at Asn313 and Asn323. N-linked (GlcNAc...) asparagine glycosylation is found at Asn385, Asn403, and Asn421. N-linked (GlcNAc...) asparagine glycosylation is found at Asn483, Asn504, Asn523, Asn549, and Asn571. LRR repeat units follow at residues 561–583 and 585–606; these read ELHM…ISGL and NLEV…SFQS. Residues 680–700 form a helical membrane-spanning segment; sequence IVVLTISLAIGITLLLSVILL. A Phosphothreonine modification is found at Thr751. Residues 754-1025 form the Protein kinase domain; the sequence is FSQANIIGCG…PLIEEVVTWL (272 aa). Residues 760-768 and Lys782 contribute to the ATP site; that span reads IGCGGFGLV. 2 positions are modified to phosphotyrosine: Tyr827 and Tyr867. The active-site Proton acceptor is the Asp880. The residue at position 922 (Tyr922) is a Phosphotyrosine. The LRR 20 repeat unit spans residues 995 to 1020; it reads RTVLEMLEIACKCIDHEPRRRPLIEE.

It belongs to the protein kinase superfamily. Ser/Thr protein kinase family.

It localises to the cell membrane. The enzyme catalyses L-seryl-[protein] + ATP = O-phospho-L-seryl-[protein] + ADP + H(+). It carries out the reaction L-threonyl-[protein] + ATP = O-phospho-L-threonyl-[protein] + ADP + H(+). Its function is as follows. Phytosulfokine receptor with a serine/threonine-protein kinase activity. The protein is Phytosulfokine receptor 2 (PSKR2) of Arabidopsis thaliana (Mouse-ear cress).